The chain runs to 102 residues: UPF0473 protein SERP1179 (102 aa).

This sequence belongs to the UPF0473 family.

This chain is UPF0473 protein SERP1179, found in Staphylococcus epidermidis (strain ATCC 35984 / DSM 28319 / BCRC 17069 / CCUG 31568 / BM 3577 / RP62A).